We begin with the raw amino-acid sequence, 314 residues long: Methionyl-tRNA formyltransferase (314 aa).

112 to 115 (SLLP) contributes to the (6S)-5,6,7,8-tetrahydrofolate binding site.

It belongs to the Fmt family.

The catalysed reaction is L-methionyl-tRNA(fMet) + (6R)-10-formyltetrahydrofolate = N-formyl-L-methionyl-tRNA(fMet) + (6S)-5,6,7,8-tetrahydrofolate + H(+). Attaches a formyl group to the free amino group of methionyl-tRNA(fMet). The formyl group appears to play a dual role in the initiator identity of N-formylmethionyl-tRNA by promoting its recognition by IF2 and preventing the misappropriation of this tRNA by the elongation apparatus. The chain is Methionyl-tRNA formyltransferase from Buchnera aphidicola subsp. Schizaphis graminum (strain Sg).